Consider the following 418-residue polypeptide: S-adenosylmethionine synthase (418 aa).

His-16 provides a ligand contact to ATP. Asp-18 is a Mg(2+) binding site. Residue Glu-44 participates in K(+) binding. L-methionine contacts are provided by Glu-57 and Gln-100. The flexible loop stretch occupies residues 100–110 (QSPDISQGVTK). ATP is bound by residues 175–177 (DGK), 251–252 (KF), Asp-260, 266–267 (RK), Ala-283, and Lys-287. Residue Asp-260 participates in L-methionine binding. Lys-291 contacts L-methionine.

This sequence belongs to the AdoMet synthase family. Homotetramer; dimer of dimers. The cofactor is Mg(2+). K(+) serves as cofactor.

Its subcellular location is the cytoplasm. The catalysed reaction is L-methionine + ATP + H2O = S-adenosyl-L-methionine + phosphate + diphosphate. Its pathway is amino-acid biosynthesis; S-adenosyl-L-methionine biosynthesis; S-adenosyl-L-methionine from L-methionine: step 1/1. Functionally, catalyzes the formation of S-adenosylmethionine (AdoMet) from methionine and ATP. The overall synthetic reaction is composed of two sequential steps, AdoMet formation and the subsequent tripolyphosphate hydrolysis which occurs prior to release of AdoMet from the enzyme. In Gloeothece citriformis (strain PCC 7424) (Cyanothece sp. (strain PCC 7424)), this protein is S-adenosylmethionine synthase.